The sequence spans 242 residues: Probable transcriptional regulatory protein EF_0663 (242 aa).

The span at 1–14 shows a compositional bias: polar residues; it reads MSGHSKWSNIQGRK. Positions 1-22 are disordered; that stretch reads MSGHSKWSNIQGRKNAQDAKRG.

The protein belongs to the TACO1 family.

It localises to the cytoplasm. The protein is Probable transcriptional regulatory protein EF_0663 of Enterococcus faecalis (strain ATCC 700802 / V583).